The sequence spans 433 residues: Serine--tRNA ligase (433 aa).

Thr-235 to Glu-237 serves as a coordination point for L-serine. Arg-266–Glu-268 lines the ATP pocket. Glu-289 serves as a coordination point for L-serine. Glu-353–Ser-356 serves as a coordination point for ATP. L-serine is bound at residue Ser-388.

Belongs to the class-II aminoacyl-tRNA synthetase family. Type-1 seryl-tRNA synthetase subfamily. In terms of assembly, homodimer. The tRNA molecule binds across the dimer.

The protein localises to the cytoplasm. It catalyses the reaction tRNA(Ser) + L-serine + ATP = L-seryl-tRNA(Ser) + AMP + diphosphate + H(+). The enzyme catalyses tRNA(Sec) + L-serine + ATP = L-seryl-tRNA(Sec) + AMP + diphosphate + H(+). Its pathway is aminoacyl-tRNA biosynthesis; selenocysteinyl-tRNA(Sec) biosynthesis; L-seryl-tRNA(Sec) from L-serine and tRNA(Sec): step 1/1. Its function is as follows. Catalyzes the attachment of serine to tRNA(Ser). Is also able to aminoacylate tRNA(Sec) with serine, to form the misacylated tRNA L-seryl-tRNA(Sec), which will be further converted into selenocysteinyl-tRNA(Sec). The polypeptide is Serine--tRNA ligase (Burkholderia vietnamiensis (strain G4 / LMG 22486) (Burkholderia cepacia (strain R1808))).